Consider the following 1313-residue polypeptide: Kinesin-like protein KIN-12B (1313 aa).

Positions Met-1–Leu-74 are disordered. A compositionally biased stretch (polar residues) spans Glu-17–Thr-26. The Kinesin motor domain occupies Gly-96–Ile-431. Gly-170–Thr-177 provides a ligand contact to ATP. 3 microtubules-binding regions span residues Ser-298–His-302, Val-331–Glu-337, and His-380–Arg-384. The segment at Lys-429–Gly-467 is neck. The tract at residues Glu-685 to Lys-709 is disordered. The segment covering Arg-699–Gln-708 has biased composition (polar residues). 3 coiled-coil regions span residues Leu-932–Ser-1003, Ala-1062–Glu-1130, and Glu-1167–Ser-1241.

It belongs to the TRAFAC class myosin-kinesin ATPase superfamily. Kinesin family. KIN-12 subfamily. Homodimer and heterodimer with KIN12A. Interacts with TIO.

Its subcellular location is the cytoplasm. The protein localises to the cytoskeleton. It is found in the phragmoplast. Functionally, plus-end directed kinesin-like motor enzyme that plays a critical role in the organization of phragmoplast microtubules during cytokinesis. Constitutes a signaling module in association with serine/threonine-protein kinase TIO that is required to support phragmoplast expansion and cell-plate growth in plant cells. The chain is Kinesin-like protein KIN-12B from Arabidopsis thaliana (Mouse-ear cress).